The following is a 40-amino-acid chain: Photosystem II reaction center protein J (40 aa).

The helical transmembrane segment at 8–28 (IPLWIIGTVAGILVIGLIGIF) threads the bilayer.

Belongs to the PsbJ family. In terms of assembly, PSII is composed of 1 copy each of membrane proteins PsbA, PsbB, PsbC, PsbD, PsbE, PsbF, PsbH, PsbI, PsbJ, PsbK, PsbL, PsbM, PsbT, PsbX, PsbY, PsbZ, Psb30/Ycf12, at least 3 peripheral proteins of the oxygen-evolving complex and a large number of cofactors. It forms dimeric complexes.

It is found in the plastid. It localises to the chloroplast thylakoid membrane. Functionally, one of the components of the core complex of photosystem II (PSII). PSII is a light-driven water:plastoquinone oxidoreductase that uses light energy to abstract electrons from H(2)O, generating O(2) and a proton gradient subsequently used for ATP formation. It consists of a core antenna complex that captures photons, and an electron transfer chain that converts photonic excitation into a charge separation. The sequence is that of Photosystem II reaction center protein J from Oenothera elata subsp. hookeri (Hooker's evening primrose).